The sequence spans 774 residues: DNA ligase 3 (774 aa).

A disordered region spans residues 1 to 25; it reads MPPKKRMKNGSSLKSTSKKGEKSRN. The active-site N6-AMP-lysine intermediate is the K433.

Belongs to the ATP-dependent DNA ligase family.

It localises to the nucleus. The catalysed reaction is ATP + (deoxyribonucleotide)n-3'-hydroxyl + 5'-phospho-(deoxyribonucleotide)m = (deoxyribonucleotide)n+m + AMP + diphosphate.. The polypeptide is DNA ligase 3 (adl1) (Schizosaccharomyces pombe (strain 972 / ATCC 24843) (Fission yeast)).